Reading from the N-terminus, the 468-residue chain is POC1 centriolar protein homolog B (468 aa).

WD repeat units lie at residues 16–55, 58–97, 100–139, 142–181, 184–223, 226–265, and 268–307; these read GHKDAVTCVDFSPDSKQLASSSADACVMIWNFKPQSRAYK, GHKEAVTCVQFSPSGHLVASSSKDRTVRLWAPNIKGESTV, AHTAVVRCVNFSSDGQTFITASDDKSIKAWNLHRQRFLFS, QHTNWVRCARFSPDGRLIASCSDDKTVRIWDLTNRLCINT, DYKGHSNYVDFNQMGTCVASAGADSTVKVWDIRMNKLLQH, VHNAGVSSLSFHPSGNYLLTASSDGTLKILDLLEGRLIYT, and GHQGPVLSVTFSKSGDQFASGATDAQVLVWKTNFDKYSVK. Positions 420-459 form a coiled coil; sequence NTLEQIVDQLNVLTQTVSILEHRLTLTEDKLKECLENQQK.

This sequence belongs to the WD repeat POC1 family. In terms of assembly, interacts with pat. In terms of tissue distribution, highly expressed in ovary and, at low levels, in testis.

It localises to the cytoplasm. It is found in the cytoskeleton. The protein localises to the microtubule organizing center. The protein resides in the centrosome. Its subcellular location is the centriole. In terms of biological role, plays an important role in centriole assembly and/or stability and ciliogenesis. Involved in early steps of centriole duplication, as well as in the later steps of centriole length control. The polypeptide is POC1 centriolar protein homolog B (poc1b) (Xenopus laevis (African clawed frog)).